A 108-amino-acid polypeptide reads, in one-letter code: Small ribosomal subunit protein bS6 (108 aa).

The protein belongs to the bacterial ribosomal protein bS6 family.

Binds together with bS18 to 16S ribosomal RNA. The chain is Small ribosomal subunit protein bS6 from Nostoc sp. (strain PCC 7120 / SAG 25.82 / UTEX 2576).